The chain runs to 185 residues: Elongation factor P (185 aa).

The protein belongs to the elongation factor P family.

It is found in the cytoplasm. Its pathway is protein biosynthesis; polypeptide chain elongation. Its function is as follows. Involved in peptide bond synthesis. Stimulates efficient translation and peptide-bond synthesis on native or reconstituted 70S ribosomes in vitro. Probably functions indirectly by altering the affinity of the ribosome for aminoacyl-tRNA, thus increasing their reactivity as acceptors for peptidyl transferase. The sequence is that of Elongation factor P from Nitrosomonas europaea (strain ATCC 19718 / CIP 103999 / KCTC 2705 / NBRC 14298).